A 176-amino-acid polypeptide reads, in one-letter code: Glyoxalase domain-containing protein RDO1 (176 aa).

One can recognise a VOC domain in the interval 53-172 (SLDHLVITCH…DNNLIELSSY (120 aa)). Glu168 (proton donor/acceptor) is an active-site residue.

It belongs to the glyoxalase I family.

Its pathway is secondary metabolite biosynthesis. Its function is as follows. Glyoxalase domain-containing protein; part of the gene cluster that mediates the biosynthesis of itaconic acid and 2-hydroxyparaconate. Cis-aconitate is secreted by the mitochondrial tricarboxylate transporter MTT1. In the cytosol cis-aconitate is converted into trans-aconitate via isomerization by the aconitate-delta-isomerase ADI1. Decarboxylation of trans-aconitate by the trans-aconitate decarboxylase TAD1 then leads then to the production of itaconic acid. The cytochrome P450 monooxygenase CYP3 further converts itaconate to 2-hydroxyparaconate via oxidation of the double bond, leading to a transient epoxide, which can subsequently be lactonized to produce 2-hydroxyparaconate. Secretion of itaconate and possibly 2-hydroxyparaconate into the medium is mediated by the major facilitator ITP1. The glyoxalase domain-containing protein RDO1 is not involved in the biosynthesis of itaconate and 2-hydroxyparaconate, however, it might play a role in the further conversion of 2-hydroxyparaconate to itatartarate. This Mycosarcoma maydis (Corn smut fungus) protein is Glyoxalase domain-containing protein RDO1.